Reading from the N-terminus, the 440-residue chain is MTTGGKNTFYIHTFGCQMNQADSATITSLLQQAGYVAAESEDRAGIILLNTCAVRENAVDRIEHYLQHLQGLKKRDKRLIVGILGCIPQHQREEMFATSPAIDLLAGPDTYRTLPQLIEQARSGAKPFSLDFNVAETYEGIDPVRQGSISAFVPVMRGCNNMCAYCVVPFTRGRERSHPFRAVMGEVQKLVASGYSEITLLGQNVNSYDDPEQGVNFAALLDAVSCAAPQARVRFTTSHPKDISGELVRTIANRPNICNHIHLPVQSGSTATLGRMNRGHTIEEYLEKIALIRSLLPGVTLSTDIIAGFCGEQEEDHQASLELLSTLRFDSAYMFYYSTRPGTFAARTLVDDVPEVVKKRRLQEIIDLQNTISGELFQQAIGSVVEVLAESESKRSAEQLMGRTPGNRAVVFDREGYRPGDLVRVLITAATSATLTGRPV.

Residues 7 to 123 (NTFYIHTFGC…LPQLIEQARS (117 aa)) enclose the MTTase N-terminal domain. Cysteine 16, cysteine 52, cysteine 86, cysteine 159, cysteine 163, and cysteine 166 together coordinate [4Fe-4S] cluster. The Radical SAM core domain occupies 145–375 (RQGSISAFVP…IDLQNTISGE (231 aa)). In terms of domain architecture, TRAM spans 378–440 (QQAIGSVVEV…TSATLTGRPV (63 aa)).

The protein belongs to the methylthiotransferase family. MiaB subfamily. As to quaternary structure, monomer. The cofactor is [4Fe-4S] cluster.

Its subcellular location is the cytoplasm. The enzyme catalyses N(6)-dimethylallyladenosine(37) in tRNA + (sulfur carrier)-SH + AH2 + 2 S-adenosyl-L-methionine = 2-methylsulfanyl-N(6)-dimethylallyladenosine(37) in tRNA + (sulfur carrier)-H + 5'-deoxyadenosine + L-methionine + A + S-adenosyl-L-homocysteine + 2 H(+). In terms of biological role, catalyzes the methylthiolation of N6-(dimethylallyl)adenosine (i(6)A), leading to the formation of 2-methylthio-N6-(dimethylallyl)adenosine (ms(2)i(6)A) at position 37 in tRNAs that read codons beginning with uridine. The polypeptide is tRNA-2-methylthio-N(6)-dimethylallyladenosine synthase (Pelodictyon phaeoclathratiforme (strain DSM 5477 / BU-1)).